Consider the following 189-residue polypeptide: Elongation factor P (189 aa).

The protein belongs to the elongation factor P family.

The protein resides in the cytoplasm. Its pathway is protein biosynthesis; polypeptide chain elongation. Involved in peptide bond synthesis. Stimulates efficient translation and peptide-bond synthesis on native or reconstituted 70S ribosomes in vitro. Probably functions indirectly by altering the affinity of the ribosome for aminoacyl-tRNA, thus increasing their reactivity as acceptors for peptidyl transferase. The sequence is that of Elongation factor P from Chloroflexus aurantiacus (strain ATCC 29364 / DSM 637 / Y-400-fl).